A 475-amino-acid polypeptide reads, in one-letter code: Zinc finger protein 383 (475 aa).

The region spanning 6-77 is the KRAB domain; that stretch reads VMFSDVSIDF…GRELTRGLCS (72 aa). 11 consecutive C2H2-type zinc fingers follow at residues 170–192, 198–220, 226–248, 254–276, 282–304, 310–332, 338–360, 366–388, 394–416, 422–444, and 450–472; these read FECKKCGKAFSQNSQFIQHQRIH, YECKECGKFFSCGSHVTRHLKIH, FECKECGKAFSCSSYLSQHQRIH, YECKECGKAFSYCSNLIDHQRIH, YACKVCGKAFTKSSQLFQHVRIH, YECKECGKAFTQSSKLVQHQRIH, YECKECGKAFSSGSALTNHQRIH, YDCKECGKAFTQSSQLRQHQRIH, FECLECGKAFTQNSQLFQHQRIH, YECNECGKAFNKCSNLTRHLRIH, and YNCKECGKAFSSGSDLIRHQGIH.

It belongs to the krueppel C2H2-type zinc-finger protein family.

It is found in the nucleus. Its subcellular location is the cytoplasm. May function as a transcriptional repressor, suppressing transcriptional activities mediated by MAPK signaling pathways. The chain is Zinc finger protein 383 (ZNF383) from Macaca fascicularis (Crab-eating macaque).